The primary structure comprises 211 residues: Transcription factor E (211 aa).

The region spanning 10–130 (GNPAIYQYLL…LWLMRMDHMN (121 aa)) is the HTH TFE/IIEalpha-type domain.

The protein belongs to the TFE family. Monomer. Interaction with RNA polymerase subunits RpoF and RpoE is necessary for Tfe stimulatory transcription activity. Able to interact with Tbp and RNA polymerase in the absence of DNA promoter. Interacts both with the preinitiation and elongation complexes.

In terms of biological role, transcription factor that plays a role in the activation of archaeal genes transcribed by RNA polymerase. Facilitates transcription initiation by enhancing TATA-box recognition by TATA-box-binding protein (Tbp), and transcription factor B (Tfb) and RNA polymerase recruitment. Not absolutely required for transcription in vitro, but particularly important in cases where Tbp or Tfb function is not optimal. It dynamically alters the nucleic acid-binding properties of RNA polymerases by stabilizing the initiation complex and destabilizing elongation complexes. Seems to translocate with the RNA polymerase following initiation and acts by binding to the non template strand of the transcription bubble in elongation complexes. The sequence is that of Transcription factor E from Methanocorpusculum labreanum (strain ATCC 43576 / DSM 4855 / Z).